Here is a 281-residue protein sequence, read N- to C-terminus: Para-Rep C1 (281 aa).

Residues 3–97 (TLQGTFWCFT…VAGPWTYGEL (95 aa)) enclose the CRESS-DNA virus Rep endonuclease domain. An RCR-1 motif is present at residues 10–13 (CFTL). Residues glutamate 36 and histidine 42 each coordinate a divalent metal cation. The RCR-2 motif lies at 42–44 (HLQ). Residues 51–71 (KRSTLKMMKELLPGAHLEVSK) carry the Nuclear localization signal motif. The For DNA cleavage activity role is filled by tyrosine 80. The short motif at 80–83 (YAMK) is the RCR-3 element. Glutamate 85 serves as a coordination point for a divalent metal cation. The Nuclear localization signal signature appears at 97–103 (LLKKGSN). 173–181 (GPQGGEGKT) provides a ligand contact to ATP.

The protein belongs to the nanoviridea/circoviridae replication-associated protein family. As to quaternary structure, homooligomer (Potential). Rep binds to repeated DNA motifs (iterons). It depends on Mg(2+) as a cofactor. Requires Mn(2+) as cofactor.

Its subcellular location is the host nucleus. The catalysed reaction is ATP + H2O = ADP + phosphate + H(+). Its function is as follows. Initiates and terminates the replication only of its own subviral DNA molecule. The closed circular ssDNA genome is first converted to a superhelical dsDNA. Rep binds a specific hairpin at the genome origin of replication. Introduces an endonucleolytic nick within the intergenic region of the genome, thereby initiating the rolling circle replication (RCR). Following cleavage, binds covalently to the 5'-phosphate of DNA as a tyrosyl ester. The cleavage gives rise to a free 3'-OH that serves as a primer for the cellular DNA polymerase. The polymerase synthesizes the (+) strand DNA by rolling circle mechanism. After one round of replication, a Rep-catalyzed nucleotidyl transfer reaction releases a circular single-stranded virus genome, thereby terminating the replication. Displays origin-specific DNA cleavage, nucleotidyl transferase, ATPase and helicase activities. The sequence is that of Para-Rep C1 (C1) from Milk vetch dwarf C1 alphasatellite (MVDC1A).